We begin with the raw amino-acid sequence, 451 residues long: Glucose-6-phosphate isomerase (451 aa).

T38 is subject to Phosphothreonine. The active-site Proton donor is the E290. Active-site residues include H311 and K425.

This sequence belongs to the GPI family.

The protein resides in the cytoplasm. The enzyme catalyses alpha-D-glucose 6-phosphate = beta-D-fructose 6-phosphate. It functions in the pathway carbohydrate biosynthesis; gluconeogenesis. It participates in carbohydrate degradation; glycolysis; D-glyceraldehyde 3-phosphate and glycerone phosphate from D-glucose: step 2/4. Its function is as follows. Catalyzes the reversible isomerization of glucose-6-phosphate to fructose-6-phosphate. The chain is Glucose-6-phosphate isomerase from Shouchella clausii (strain KSM-K16) (Alkalihalobacillus clausii).